A 156-amino-acid chain; its full sequence is MKVMVIQGPNLNMLGIREQHIYGPMKLEDIHKQMKNFADANGLDIEFFQSNLEGEIVDKIQESLGDADGIIINAGAYTHTSIAIRDAIAAVQLPTIEVHLSNVYRREEFRQKSMIAPVCAGVITGFGPFSYHLAMVAMHQIFQEIEALKAQQPQQA.

Residue Tyr-22 is the Proton acceptor of the active site. Residues Asn-73, His-79, and Asp-86 each coordinate substrate. His-99 acts as the Proton donor in catalysis. Substrate contacts are provided by residues 100–101 (LS) and Arg-110.

This sequence belongs to the type-II 3-dehydroquinase family. In terms of assembly, homododecamer.

It catalyses the reaction 3-dehydroquinate = 3-dehydroshikimate + H2O. Its pathway is metabolic intermediate biosynthesis; chorismate biosynthesis; chorismate from D-erythrose 4-phosphate and phosphoenolpyruvate: step 3/7. In terms of biological role, catalyzes a trans-dehydration via an enolate intermediate. The protein is 3-dehydroquinate dehydratase of Nitratiruptor sp. (strain SB155-2).